Reading from the N-terminus, the 163-residue chain is Photosystem II extrinsic protein V (163 aa).

Residues Met1–Ala26 form the signal peptide. The heme c site is built by Cys63, Cys66, His67, and Met130.

Belongs to the cytochrome c family. PsbV subfamily. As to quaternary structure, PSII is composed of 1 copy each of membrane proteins PsbA, PsbB, PsbC, PsbD, PsbE, PsbF, PsbH, PsbI, PsbJ, PsbK, PsbL, PsbM, PsbT, PsbY, PsbZ, Psb30/Ycf12, at least 3 peripheral proteins of the oxygen-evolving complex and a large number of cofactors. It forms dimeric complexes. Heme c serves as cofactor.

Its subcellular location is the plastid. It is found in the chloroplast thylakoid membrane. Functionally, one of the extrinsic, lumenal subunits of photosystem II (PSII). PSII is a light-driven water plastoquinone oxidoreductase, using light energy to abstract electrons from H(2)O, generating a proton gradient subsequently used for ATP formation. The extrinsic proteins stabilize the structure of photosystem II oxygen-evolving complex (OEC), the ion environment of oxygen evolution and protect the OEC against heat-induced inactivation. In Phaeodactylum tricornutum (strain CCAP 1055/1), this protein is Photosystem II extrinsic protein V.